Here is a 203-residue protein sequence, read N- to C-terminus: Large ribosomal subunit protein eL15 (203 aa).

The tract at residues 160 to 186 (ESRGLTSTGKRSRGLNKGHRYNKTRAG) is disordered. The segment covering 169–186 (KRSRGLNKGHRYNKTRAG) has biased composition (basic residues).

It belongs to the eukaryotic ribosomal protein eL15 family. As to quaternary structure, component of the large ribosomal subunit (LSU). Mature N.crassa ribosomes consist of a small (40S) and a large (60S) subunit. The 40S small subunit contains 1 molecule of ribosomal RNA (18S rRNA) and at least 32 different proteins. The large 60S subunit contains 3 rRNA molecules (26S, 5.8S and 5S rRNA) and at least 42 different proteins.

It localises to the cytoplasm. Functionally, component of the ribosome, a large ribonucleoprotein complex responsible for the synthesis of proteins in the cell. The small ribosomal subunit (SSU) binds messenger RNAs (mRNAs) and translates the encoded message by selecting cognate aminoacyl-transfer RNA (tRNA) molecules. The large subunit (LSU) contains the ribosomal catalytic site termed the peptidyl transferase center (PTC), which catalyzes the formation of peptide bonds, thereby polymerizing the amino acids delivered by tRNAs into a polypeptide chain. The nascent polypeptides leave the ribosome through a tunnel in the LSU and interact with protein factors that function in enzymatic processing, targeting, and the membrane insertion of nascent chains at the exit of the ribosomal tunnel. The polypeptide is Large ribosomal subunit protein eL15 (rpl-15) (Neurospora crassa (strain ATCC 24698 / 74-OR23-1A / CBS 708.71 / DSM 1257 / FGSC 987)).